The following is a 502-amino-acid chain: Cytochrome P450 monooxygenase orf6 (502 aa).

The chain crosses the membrane as a helical span at residues 3–25 (ALWVLAVALVAYFLCLSIYRLFL). Asparagine 382 carries N-linked (GlcNAc...) asparagine glycosylation. Cysteine 445 is a binding site for heme.

Belongs to the cytochrome P450 family. The cofactor is heme.

It localises to the membrane. It participates in mycotoxin biosynthesis. Its function is as follows. Cytochrome P450 monooxygenase; part of the gene cluster that mediates the biosynthesis of brefeldin A (BFA), a protein transport inhibitor that shows antiviral, antifungal, and antitumor properties. The proposed biosynthesis of BFA involves formation of an acyclic polyketide chain that is differentially tailored throughout the backbone. The highly reducing polyketide synthase Bref-PKS is proposed to synthesize the precisely reduced octaketide precursor, which could then be directly offloaded by the thiohydrolase enzyme Bref-TH followed by a cytochrome P450 monooxygenase-mediated formation of the cyclopentane ring and macrocyclization to afford 7-deoxy BFA. Alternatively, the first ring annulation can also occur on the ACP-tethered intermediate before the thiohydrolase release and lactonization. The C7-hydroxylation by another cytochrome P450 monooxygenase is believed to be the final step in the process to obtain the final structure of BFA. In addition to the HRPKS Bref-PKS and the thiohydrolase Bref-TH, the brefeldin A biosynthesis cluster contains 4 cytochrome p450 monooxygenases (called orf3 to orf6), as well a the probable cluster-specific transcription regulator orf8. The protein is Cytochrome P450 monooxygenase orf6 of Eupenicillium brefeldianum (Penicillium brefeldianum).